The chain runs to 953 residues: Coatomer subunit beta (953 aa).

Threonine 2 is subject to N-acetylthreonine. 6 HEAT repeats span residues 96–131 (HEMI…KEAE), 132–168 (LLEP…NFEH), 240–276 (SERA…SAPT), 277–314 (AIKA…HPAH), 316–353 (RVLQ…SRNV), and 396–433 (DMAA…RFDN). At lysine 494 the chain carries N6-acetyllysine.

As to quaternary structure, oligomeric complex that consists of at least the alpha, beta, beta', gamma, delta, epsilon and zeta subunits. Interacts with SCYL1. Interacts with COPG1. Interacts (via trunk domain) with ARF1 (via switch I region); the interaction is direct. Interacts with KCNK2/TREK (via N-terminus); this interaction increases the channel-mediated whole cell currents and promotes plasma membrane expression of KCNK2/TREK. Interacts with anthrax lethal factor (LF); this interaction may facilitate endosomal vesicle membrane translocation of LF and its release from the lumen of endosomal vesicles to external milieu. Interacts with CAPN8 and PRKCE. Interacts with ARF1 (myristoylated); this interaction is required for binding of COPB1 to Golgi membranes. Interacts with STX17. Interacts with TMEM115. Interacts with HLA-G-B2M complex; this interaction mediates the endoplasmic reticulum (ER) retrieval of HLA-E-B2M complexes that bind low affinity peptides. Interacts with TMEM41B. (Microbial infection) Interacts (via C-terminus) with HIV-1 Nef; the interaction is direct. In terms of processing, proteolytically cleaved between Ser-528 and Ser-529 by CAPN8.

It localises to the cytoplasm. The protein resides in the golgi apparatus membrane. Its subcellular location is the cytoplasmic vesicle. It is found in the COPI-coated vesicle membrane. The protein localises to the cell membrane. It localises to the endoplasmic reticulum-Golgi intermediate compartment. In terms of biological role, the coatomer is a cytosolic protein complex that binds to dilysine motifs and reversibly associates with Golgi non-clathrin-coated vesicles, which further mediate biosynthetic protein transport from the ER, via the Golgi up to the trans Golgi network. Coatomer complex is required for budding from Golgi membranes, and is essential for the retrograde Golgi-to-ER transport of dilysine-tagged proteins. In mammals, the coatomer can only be recruited by membranes associated to ADP-ribosylation factors (ARFs), which are small GTP-binding proteins; the complex also influences the Golgi structural integrity, as well as the processing, activity, and endocytic recycling of LDL receptors. Plays a functional role in facilitating the transport of kappa-type opioid receptor mRNAs into axons and enhances translation of these proteins. Required for limiting lipid storage in lipid droplets. Involved in lipid homeostasis by regulating the presence of perilipin family members PLIN2 and PLIN3 at the lipid droplet surface and promoting the association of adipocyte surface triglyceride lipase (PNPLA2) with the lipid droplet to mediate lipolysis. Involved in the Golgi disassembly and reassembly processes during cell cycle. Involved in autophagy by playing a role in early endosome function. Plays a role in organellar compartmentalization of secretory compartments including endoplasmic reticulum (ER)-Golgi intermediate compartment (ERGIC), Golgi, trans-Golgi network (TGN) and recycling endosomes, and in biosynthetic transport of CAV1. Promotes degradation of Nef cellular targets CD4 and MHC class I antigens by facilitating their trafficking to degradative compartments. This chain is Coatomer subunit beta, found in Homo sapiens (Human).